A 50-amino-acid chain; its full sequence is Mating-type pheromone BAP1(3) (50 aa).

Cysteine 47 is modified (cysteine methyl ester). The S-farnesyl cysteine moiety is linked to residue cysteine 47. A propeptide spans 48–50 (removed in mature form); it reads VVA.

The protein resides in the cell membrane. Its function is as follows. Activates B-regulated development. In Schizophyllum commune (Split gill fungus), this protein is Mating-type pheromone BAP1(3) (BAP1(3)).